The sequence spans 241 residues: Transcriptional regulatory protein SrrA (241 aa).

The region spanning Glu4–Leu117 is the Response regulatory domain. Residue Asp53 is modified to 4-aspartylphosphate. The segment at residues Arg133–Val233 is a DNA-binding region (ompR/PhoB-type).

Post-translationally, phosphorylated by SrrB.

It localises to the cytoplasm. Its function is as follows. Member of the two-component regulatory system SrrA/SrrB, which is involved in the global regulation of staphylococcal virulence factors in response to environmental oxygen levels as well as biofilm formation. Also plays an essential role in host-derived nitric oxide resistance by regulating hmp/flavohemoglobin, an enzyme that detoxifies nitric oxide by converting it to nitrate. Functions as a transcription regulator by direct binding to promoter regions of target genes. In Staphylococcus aureus (strain NCTC 8325 / PS 47), this protein is Transcriptional regulatory protein SrrA (srrA).